Reading from the N-terminus, the 188-residue chain is Der GTPase-activating protein YihI (188 aa).

Disordered regions lie at residues methionine 1–proline 80 and aspartate 162–phenylalanine 188. The segment covering threonine 27 to aspartate 37 has biased composition (basic and acidic residues). Residues asparagine 47–glycine 57 show a composition bias toward polar residues.

The protein belongs to the YihI family. As to quaternary structure, interacts with Der.

Its function is as follows. A GTPase-activating protein (GAP) that modifies Der/EngA GTPase function. May play a role in ribosome biogenesis. This chain is Der GTPase-activating protein YihI, found in Yersinia pseudotuberculosis serotype O:1b (strain IP 31758).